Reading from the N-terminus, the 237-residue chain is tRNA (guanine-N(7)-)-methyltransferase (237 aa).

Positions 35, 60, 87, and 113 each coordinate S-adenosyl-L-methionine. Aspartate 113 is an active-site residue. Positions 117 and 149 each coordinate substrate.

This sequence belongs to the class I-like SAM-binding methyltransferase superfamily. TrmB family.

It carries out the reaction guanosine(46) in tRNA + S-adenosyl-L-methionine = N(7)-methylguanosine(46) in tRNA + S-adenosyl-L-homocysteine. It functions in the pathway tRNA modification; N(7)-methylguanine-tRNA biosynthesis. In terms of biological role, catalyzes the formation of N(7)-methylguanine at position 46 (m7G46) in tRNA. This is tRNA (guanine-N(7)-)-methyltransferase from Synechococcus sp. (strain CC9311).